We begin with the raw amino-acid sequence, 1169 residues long: Phospholipid-transporting ATPase IF (1169 aa).

At 1 to 47 (LGFDPPHQSDTRTIYIANRFPQNGLYTPQKFIDNRIISSKYTVWNFV) the chain is on the cytoplasmic side. Residues 48 to 69 (PKNLFEQFRRVANFYFLIIFLV) traverse the membrane as a helical segment. The Extracellular segment spans residues 70–74 (QLMID). Residues 75–96 (TPTSPITSGLPLFFVITVTAIK) traverse the membrane as a helical segment. Residues 97-281 (QGYEDWLRHN…SAVEKSMNTF (185 aa)) lie on the Cytoplasmic side of the membrane. A helical membrane pass occupies residues 282–303 (LIIYLIILISEAIISTILKYTW). Topologically, residues 304 to 333 (QAEEKWDEPWYNQKTEHQRNSSKILRFISD) are extracellular. Residues 334–351 (FLAFLVLYNFIIPISLYV) form a helical membrane-spanning segment. At 352–868 (TVEMQKFLGS…HGHFYYIRIA (517 aa)) the chain is on the cytoplasmic side. Asp399 serves as the catalytic 4-aspartylphosphate intermediate. 12 residues coordinate ATP: Asp399, Lys400, Thr401, Glu523, Phe564, Lys587, Arg618, Thr698, Gly699, Asp700, Arg786, and Lys792. Mg(2+) is bound at residue Asp399. Thr401 is a binding site for Mg(2+). The required for binding to the RING-finger of HLTF stretch occupies residues 794–802 (KVIRLIKIS). Residue Asp813 coordinates Mg(2+). Positions 816 and 817 each coordinate ATP. Asp817 serves as a coordination point for Mg(2+). Residues 869 to 890 (TLVQYFFYKNVCFITPQFLYQF) traverse the membrane as a helical segment. At 891-902 (YCLFSQQTLYDS) the chain is on the extracellular side. The chain crosses the membrane as a helical span at residues 903–922 (VYLTLYNICFTSLPILIYSL). Residues 923–952 (LEQHIDPHILQNKPTLYRDISKNRLLSIKT) are Cytoplasmic-facing. Residues 953–974 (FLYWTILGFSRSFIFLFGSYFL) form a helical membrane-spanning segment. Over 975 to 989 (IGKDASLLGNGQMFG) the chain is Extracellular. Residues 990–1012 (NWTFGTLVFTVMVITVTVKMALE) form a helical membrane-spanning segment. Over 1013-1017 (THFWT) the chain is Cytoplasmic. The helical transmembrane segment at 1018-1039 (WINHLVTWGSIIFYFVFSLFYG) threads the bilayer. At 1040 to 1057 (GILWPFLGSQNMYFVFIQ) the chain is on the extracellular side. The helical transmembrane segment at 1058 to 1082 (LVSSGSAWFAIILMVVTCLFLDVMK) threads the bilayer. Residues 1083–1169 (KVFDRQLHPT…TLSTMDSSTC (87 aa)) are Cytoplasmic-facing. Ser1146 is subject to Phosphoserine.

Belongs to the cation transport ATPase (P-type) (TC 3.A.3) family. Type IV subfamily. Component of a P4-ATPase flippase complex which consists of a catalytic alpha subunit ATP11B and an accessory beta subunit TMEM30A. In terms of assembly, interacts with HLTF (via the RING-finger). It depends on Mg(2+) as a cofactor. As to expression, ubiquitously expressed.

The protein resides in the recycling endosome membrane. Its subcellular location is the early endosome. The protein localises to the endoplasmic reticulum. It is found in the golgi apparatus. It localises to the trans-Golgi network. The protein resides in the nucleus inner membrane. It catalyses the reaction ATP + H2O + phospholipidSide 1 = ADP + phosphate + phospholipidSide 2.. The enzyme catalyses a 1,2-diacyl-sn-glycero-3-phospho-L-serine(out) + ATP + H2O = a 1,2-diacyl-sn-glycero-3-phospho-L-serine(in) + ADP + phosphate + H(+). It carries out the reaction a 1,2-diacyl-sn-glycero-3-phosphoethanolamine(out) + ATP + H2O = a 1,2-diacyl-sn-glycero-3-phosphoethanolamine(in) + ADP + phosphate + H(+). Its function is as follows. Catalytic component of a P4-ATPase flippase complex which catalyzes the hydrolysis of ATP coupled to the transport of aminophospholipids, phosphatidylserines (PS) and phosphatidylethanolamines (PE), from the outer to the inner leaflet of intracellular membranes. May contribute to the maintenance of membrane lipid asymmetry in endosome compartment. In terms of biological role, appears to play a role in the subnuclear trafficking of transcription factors with RING motifs. In Oryctolagus cuniculus (Rabbit), this protein is Phospholipid-transporting ATPase IF (ATP11B).